Reading from the N-terminus, the 139-residue chain is Hydrogenase maturation factor HypA (139 aa).

Position 2 (His2) interacts with Ni(2+). Zn(2+)-binding residues include Cys73, Cys76, Cys110, and Cys113.

The protein belongs to the HypA/HybF family.

In terms of biological role, involved in the maturation of [NiFe] hydrogenases. Required for nickel insertion into the metal center of the hydrogenase. The chain is Hydrogenase maturation factor HypA from Thermococcus gammatolerans (strain DSM 15229 / JCM 11827 / EJ3).